Reading from the N-terminus, the 306-residue chain is tRNA dimethylallyltransferase 2 (306 aa).

11-18 (GPTASGKT) is a binding site for ATP. 13–18 (TASGKT) is a binding site for substrate. Positions 36-39 (DSRQ) are interaction with substrate tRNA.

It belongs to the IPP transferase family. As to quaternary structure, monomer. It depends on Mg(2+) as a cofactor.

The enzyme catalyses adenosine(37) in tRNA + dimethylallyl diphosphate = N(6)-dimethylallyladenosine(37) in tRNA + diphosphate. Functionally, catalyzes the transfer of a dimethylallyl group onto the adenine at position 37 in tRNAs that read codons beginning with uridine, leading to the formation of N6-(dimethylallyl)adenosine (i(6)A). This chain is tRNA dimethylallyltransferase 2, found in Bacteroides thetaiotaomicron (strain ATCC 29148 / DSM 2079 / JCM 5827 / CCUG 10774 / NCTC 10582 / VPI-5482 / E50).